The sequence spans 540 residues: Glucose-6-phosphate isomerase (540 aa).

E350 (proton donor) is an active-site residue. Active-site residues include H381 and K503.

It belongs to the GPI family.

Its subcellular location is the cytoplasm. The enzyme catalyses alpha-D-glucose 6-phosphate = beta-D-fructose 6-phosphate. It functions in the pathway carbohydrate biosynthesis; gluconeogenesis. The protein operates within carbohydrate degradation; glycolysis; D-glyceraldehyde 3-phosphate and glycerone phosphate from D-glucose: step 2/4. Its function is as follows. Catalyzes the reversible isomerization of glucose-6-phosphate to fructose-6-phosphate. The polypeptide is Glucose-6-phosphate isomerase (Burkholderia cenocepacia (strain ATCC BAA-245 / DSM 16553 / LMG 16656 / NCTC 13227 / J2315 / CF5610) (Burkholderia cepacia (strain J2315))).